The following is a 249-amino-acid chain: 5'-nucleotidase SurE (249 aa).

A divalent metal cation-binding residues include aspartate 9, aspartate 10, serine 40, and asparagine 92.

This sequence belongs to the SurE nucleotidase family. Requires a divalent metal cation as cofactor.

It localises to the cytoplasm. It carries out the reaction a ribonucleoside 5'-phosphate + H2O = a ribonucleoside + phosphate. Functionally, nucleotidase that shows phosphatase activity on nucleoside 5'-monophosphates. This is 5'-nucleotidase SurE from Shewanella putrefaciens (strain CN-32 / ATCC BAA-453).